We begin with the raw amino-acid sequence, 620 residues long: Arginine--tRNA ligase (620 aa).

The 'HIGH' region motif lies at 147-157 (ANPTGPIHIGG).

This sequence belongs to the class-I aminoacyl-tRNA synthetase family. In terms of assembly, monomer.

The protein localises to the cytoplasm. The enzyme catalyses tRNA(Arg) + L-arginine + ATP = L-arginyl-tRNA(Arg) + AMP + diphosphate. This Bifidobacterium longum (strain NCC 2705) protein is Arginine--tRNA ligase.